A 503-amino-acid chain; its full sequence is Glutamyl-tRNA(Gln) amidotransferase subunit A (503 aa).

Active-site charge relay system residues include Lys-79 and Ser-154. The active-site Acyl-ester intermediate is Ser-178.

Belongs to the amidase family. GatA subfamily. As to quaternary structure, heterotrimer of A, B and C subunits.

It carries out the reaction L-glutamyl-tRNA(Gln) + L-glutamine + ATP + H2O = L-glutaminyl-tRNA(Gln) + L-glutamate + ADP + phosphate + H(+). Its function is as follows. Allows the formation of correctly charged Gln-tRNA(Gln) through the transamidation of misacylated Glu-tRNA(Gln) in organisms which lack glutaminyl-tRNA synthetase. The reaction takes place in the presence of glutamine and ATP through an activated gamma-phospho-Glu-tRNA(Gln). This Agathobacter rectalis (strain ATCC 33656 / DSM 3377 / JCM 17463 / KCTC 5835 / VPI 0990) (Eubacterium rectale) protein is Glutamyl-tRNA(Gln) amidotransferase subunit A.